The chain runs to 213 residues: Ribosomal RNA small subunit methyltransferase G (213 aa).

Residues G72, F77, 125–126 (IE), and R141 each bind S-adenosyl-L-methionine.

It belongs to the methyltransferase superfamily. RNA methyltransferase RsmG family.

It is found in the cytoplasm. The enzyme catalyses guanosine(527) in 16S rRNA + S-adenosyl-L-methionine = N(7)-methylguanosine(527) in 16S rRNA + S-adenosyl-L-homocysteine. In terms of biological role, specifically methylates the N7 position of guanine in position 527 of 16S rRNA. This chain is Ribosomal RNA small subunit methyltransferase G, found in Rhizobium meliloti (strain 1021) (Ensifer meliloti).